The primary structure comprises 272 residues: Cell wall synthesis protein Wag31 (272 aa).

2 disordered regions span residues 1 to 22 and 62 to 109; these read MPLT…GKRG and AARS…SEDT. A coiled-coil region spans residues 30-67; the sequence is AFLDLVENELTRLIEENADLRQRVAELDQELAAARSGA. 2 stretches are compositionally biased toward low complexity: residues 62 to 76 and 94 to 105; these read AARS…ATSS and VYEAPAQPAAPQ. Phosphothreonine is present on Thr74. Residues 139–206 adopt a coiled-coil conformation; the sequence is LSDARAQAEA…AERKHSEIMG (68 aa). The disordered stretch occupies residues 243 to 272; it reads ELGQRGSAAPVDSSANSDASGFGQFNRGNN.

It belongs to the DivIVA family. In terms of assembly, forms homooligomers. Interacts with PbpB and CwsA. Phosphorylated by PknA.

The protein resides in the cytoplasm. In terms of biological role, important for maintaining cell shape and cell wall integrity by localizing peptidoglycan synthesis to the cell poles. Protects PbpB (PBP3, FtsI) from oxidative stress-induced cleavage. The chain is Cell wall synthesis protein Wag31 (wag31) from Mycolicibacterium smegmatis (strain ATCC 700084 / mc(2)155) (Mycobacterium smegmatis).